Here is a 1237-residue protein sequence, read N- to C-terminus: Mediator of RNA polymerase II transcription subunit 5 (1237 aa).

Disordered regions lie at residues 1109–1131 and 1202–1226; these read DDEPCSPQPPHAAANATSHTSNA and HGAQQCRERTQNDAPVNGGKDADSG. Low complexity predominate over residues 1119-1131; the sequence is HAAANATSHTSNA.

This sequence belongs to the Mediator complex subunit 5 family. Component of the Mediator complex.

The protein localises to the nucleus. In terms of biological role, component of the Mediator complex, a coactivator involved in the regulated transcription of nearly all RNA polymerase II-dependent genes. Mediator functions as a bridge to convey information from gene-specific regulatory proteins to the basal RNA polymerase II transcription machinery. Mediator is recruited to promoters by direct interactions with regulatory proteins and serves as a scaffold for the assembly of a functional preinitiation complex with RNA polymerase II and the general transcription factors. This chain is Mediator of RNA polymerase II transcription subunit 5 (NUT1), found in Mycosarcoma maydis (Corn smut fungus).